A 259-amino-acid polypeptide reads, in one-letter code: Probable 6-phosphogluconolactonase 2 (259 aa).

It belongs to the glucosamine/galactosamine-6-phosphate isomerase family. 6-phosphogluconolactonase subfamily.

It is found in the cytoplasm. The protein resides in the cytosol. It carries out the reaction 6-phospho-D-glucono-1,5-lactone + H2O = 6-phospho-D-gluconate + H(+). It functions in the pathway carbohydrate degradation; pentose phosphate pathway; D-ribulose 5-phosphate from D-glucose 6-phosphate (oxidative stage): step 2/3. Its function is as follows. Catalyzes the hydrolysis of 6-phosphogluconolactone to 6-phosphogluconate. The protein is Probable 6-phosphogluconolactonase 2 of Arabidopsis thaliana (Mouse-ear cress).